The sequence spans 1486 residues: Chromosome partition protein MukB (1486 aa).

34 to 41 (GGNGAGKS) contributes to the ATP binding site. 3 coiled-coil regions span residues 326–418 (LEAD…QYNQ), 444–480 (LETF…QAYQ), and 509–603 (RHLA…RAPV). The interval 666–783 (PGGSEDQRLN…EVPLFGRAAR (118 aa)) is flexible hinge. Coiled-coil stretches lie at residues 835–923 (EAEI…AKLE), 977–1115 (EMLS…TAKA), and 1209–1266 (VEAI…QNVS).

It belongs to the SMC family. MukB subfamily. As to quaternary structure, homodimerization via its hinge domain. Binds to DNA via its C-terminal region. Interacts, and probably forms a ternary complex, with MukE and MukF via its C-terminal region. The complex formation is stimulated by calcium or magnesium. Interacts with tubulin-related protein FtsZ.

Its subcellular location is the cytoplasm. The protein resides in the nucleoid. Plays a central role in chromosome condensation, segregation and cell cycle progression. Functions as a homodimer, which is essential for chromosome partition. Involved in negative DNA supercoiling in vivo, and by this means organize and compact chromosomes. May achieve or facilitate chromosome segregation by condensation DNA from both sides of a centrally located replisome during cell division. This is Chromosome partition protein MukB from Escherichia coli O127:H6 (strain E2348/69 / EPEC).